The sequence spans 131 residues: Small ribosomal subunit protein uS12 (131 aa).

The interval 1-22 (MPTTQQLLRKGRKVLQKKSKVP) is disordered. Residues 9–20 (RKGRKVLQKKSK) show a composition bias toward basic residues. 3-methylthioaspartic acid is present on Asp89. Residues 102 to 131 (LDTQGVKDRNKSRSKYGTKKPKAGAAAAKK) form a disordered region. A compositionally biased stretch (basic residues) spans 113 to 131 (SRSKYGTKKPKAGAAAAKK).

The protein belongs to the universal ribosomal protein uS12 family. As to quaternary structure, part of the 30S ribosomal subunit. Contacts proteins S8 and S17. May interact with IF1 in the 30S initiation complex.

In terms of biological role, with S4 and S5 plays an important role in translational accuracy. Its function is as follows. Interacts with and stabilizes bases of the 16S rRNA that are involved in tRNA selection in the A site and with the mRNA backbone. Located at the interface of the 30S and 50S subunits, it traverses the body of the 30S subunit contacting proteins on the other side and probably holding the rRNA structure together. The combined cluster of proteins S8, S12 and S17 appears to hold together the shoulder and platform of the 30S subunit. This chain is Small ribosomal subunit protein uS12, found in Deinococcus radiodurans (strain ATCC 13939 / DSM 20539 / JCM 16871 / CCUG 27074 / LMG 4051 / NBRC 15346 / NCIMB 9279 / VKM B-1422 / R1).